Here is a 223-residue protein sequence, read N- to C-terminus: N-terminal Xaa-Pro-Lys N-methyltransferase 1-B (223 aa).

S-adenosyl-L-methionine-binding positions include G69, R74, 91–93, 119–120, and Q135; these read DVT and LQ.

It belongs to the methyltransferase superfamily. NTM1 family.

It localises to the nucleus. The catalysed reaction is N-terminal L-alanyl-L-prolyl-L-lysyl-[protein] + 3 S-adenosyl-L-methionine = N-terminal N,N,N-trimethyl-L-alanyl-L-prolyl-L-lysyl-[protein] + 3 S-adenosyl-L-homocysteine + 3 H(+). The enzyme catalyses N-terminal L-seryl-L-prolyl-L-lysyl-[protein] + 3 S-adenosyl-L-methionine = N-terminal N,N,N-trimethyl-L-seryl-L-prolyl-L-lysyl-[protein] + 3 S-adenosyl-L-homocysteine + 3 H(+). It carries out the reaction N-terminal L-prolyl-L-prolyl-L-lysyl-[protein] + 2 S-adenosyl-L-methionine = N-terminal N,N-dimethyl-L-prolyl-L-prolyl-L-lysyl-[protein] + 2 S-adenosyl-L-homocysteine + 2 H(+). Its function is as follows. Distributive alpha-N-methyltransferase that methylates the N-terminus of target proteins containing the N-terminal motif [Ala/Gly/Pro/Ser]-Pro-Lys when the initiator Met is cleaved. Specifically catalyzes mono-, di- or tri-methylation of the exposed alpha-amino group of the Ala, Gly or Ser residue in the [Ala/Gly/Ser]-Pro-Lys motif and mono- or di-methylation of Pro in the Pro-Pro-Lys motif. Required during mitosis for normal bipolar spindle formation and chromosome segregation via its action on target proteins. This is N-terminal Xaa-Pro-Lys N-methyltransferase 1-B (ntmt1-b) from Xenopus laevis (African clawed frog).